Consider the following 673-residue polypeptide: G-protein-signaling modulator 1 (673 aa).

The mediates association with membranes stretch occupies residues 1–507 (MASPAPPVAE…DLLSKFQSSR (507 aa)). TPR repeat units lie at residues 28–61 (CLEL…GTED), 66–99 (SAIY…ARTI), 106–139 (AKAS…AQEQ), 146–178 (ARAL…PPDV), 180–199 (ETLH…VKEL), 206–239 (GRAY…AKEF), 246–279 (RRAY…SRQL), 286–319 (AQAC…AQEL), and 326–359 (GRAC…SQEI). Positions 361–485 (DRNGELTARM…VRVQVPRTGI (125 aa)) are interaction with STK11/LKB1. Ser410 carries the post-translational modification Phosphoserine. Arg418 carries the omega-N-methylarginine modification. The span at 420 to 439 (PLDREQNGETHHTGDWRGPG) shows a compositional bias: basic and acidic residues. The disordered stretch occupies residues 420 to 475 (PLDREQNGETHHTGDWRGPGRDSLPLPMRSRKYQEGPDAIERRPREGSHSPLDSAD). 5 positions are modified to phosphoserine: Ser442, Ser467, Ser469, Ser490, and Ser491. Over residues 451–467 (KYQEGPDAIERRPREGS) the composition is skewed to basic and acidic residues. Residues 493–515 (EECFFDLLSKFQSSRMDDQRCPL) form the GoLoco 1 domain. The tract at residues 508-531 (MDDQRCPLEEGQAGAAEATAAPSV) is disordered. The segment covering 516-528 (EEGQAGAAEATAA) has biased composition (low complexity). A phosphoserine mark is found at Ser543 and Ser567. 3 consecutive GoLoco domains span residues 546 to 568 (TEEF…RASV), 594 to 616 (GDEF…RCPP), and 628 to 650 (DEDF…RVDL). The segment at 644–673 (DEQRVDLAGSPEQEASGLPDPQQQCPPGAS) is disordered. Position 653 is a phosphoserine (Ser653). Polar residues predominate over residues 664–673 (PQQQCPPGAS).

The protein belongs to the GPSM family. As to quaternary structure, interacts with GNAI1 and GNAI2 preferentially in their GDP-bound state. May also interact with GNAO1. Interacts with INSC/inscuteable and FRMPD1. Interacts with GNAI3. Interacts with STK11/LKB1 and MACF1. In terms of processing, phosphorylation regulates interaction with G(i/o) alpha. As to expression, expressed in neural progenitor cells (at protein level).

It is found in the cytoplasm. The protein localises to the cytosol. The protein resides in the endoplasmic reticulum membrane. Its subcellular location is the golgi apparatus membrane. It localises to the cell membrane. In terms of biological role, guanine nucleotide dissociation inhibitor (GDI) which functions as a receptor-independent activator of heterotrimeric G-protein signaling. Keeps G(i/o) alpha subunit in its GDP-bound form thus uncoupling heterotrimeric G-proteins signaling from G protein-coupled receptors. Controls spindle orientation and asymmetric cell fate of cerebral cortical progenitors. May also be involved in macroautophagy in intestinal cells. May play a role in drug addiction. In Mus musculus (Mouse), this protein is G-protein-signaling modulator 1 (Gpsm1).